A 303-amino-acid polypeptide reads, in one-letter code: Methionyl-tRNA formyltransferase (303 aa).

S108–P111 serves as a coordination point for (6S)-5,6,7,8-tetrahydrofolate.

The protein belongs to the Fmt family.

It catalyses the reaction L-methionyl-tRNA(fMet) + (6R)-10-formyltetrahydrofolate = N-formyl-L-methionyl-tRNA(fMet) + (6S)-5,6,7,8-tetrahydrofolate + H(+). Functionally, attaches a formyl group to the free amino group of methionyl-tRNA(fMet). The formyl group appears to play a dual role in the initiator identity of N-formylmethionyl-tRNA by promoting its recognition by IF2 and preventing the misappropriation of this tRNA by the elongation apparatus. The polypeptide is Methionyl-tRNA formyltransferase (Rickettsia africae (strain ESF-5)).